A 99-amino-acid chain; its full sequence is Transmembrane protein 14A (99 aa).

Helical transmembrane passes span 1-21, 24-44, and 79-99; these read MDLI…LGYK, GGVP…YGAY, and PAGL…LLLL.

Belongs to the TMEM14 family.

It localises to the mitochondrion membrane. The protein localises to the endoplasmic reticulum membrane. Functionally, inhibits apoptosis via negative regulation of the mitochondrial outer membrane permeabilization involved in apoptotic signaling pathway. In Sus scrofa (Pig), this protein is Transmembrane protein 14A (TMEM14A).